The chain runs to 314 residues: GTPase Era (314 aa).

The region spanning 21–189 (KSGFVGIIGR…QKTLINLLEP (169 aa)) is the Era-type G domain. The segment at 29–36 (GRPNVGKS) is G1. 29–36 (GRPNVGKS) provides a ligand contact to GTP. Residues 55–59 (QTTRN) form a G2 region. The segment at 76–79 (DTPG) is G3. Residues 76 to 80 (DTPGI) and 138 to 141 (NKSD) contribute to the GTP site. Residues 138-141 (NKSD) form a G4 region. Residues 168–170 (FSA) are G5. One can recognise a KH type-2 domain in the interval 212-296 (IREQILQQTR…YLQLFVKVEP (85 aa)).

The protein belongs to the TRAFAC class TrmE-Era-EngA-EngB-Septin-like GTPase superfamily. Era GTPase family. As to quaternary structure, monomer.

Its subcellular location is the cytoplasm. It localises to the cell inner membrane. Its function is as follows. An essential GTPase that binds both GDP and GTP, with rapid nucleotide exchange. Plays a role in 16S rRNA processing and 30S ribosomal subunit biogenesis and possibly also in cell cycle regulation and energy metabolism. The sequence is that of GTPase Era from Rippkaea orientalis (strain PCC 8801 / RF-1) (Cyanothece sp. (strain PCC 8801)).